Consider the following 570-residue polypeptide: D-xylulose kinase A (570 aa).

4 residues coordinate substrate: His95, Arg166, Asp282, and Asn283. Residues Trp364, 469–470 (GG), and Asn473 each bind ATP.

Belongs to the FGGY kinase family.

It localises to the cytoplasm. It catalyses the reaction D-xylulose + ATP = D-xylulose 5-phosphate + ADP + H(+). Highly specific D-xylulose kinase which participates in the catabolism of xylose. Xylose is a major component of hemicelluloses such as xylan. Most fungi utilize D-xylose via three enzymatic reactions, xylose reductase (XR), xylitol dehydrogenase (XDH), and xylulokinase, to form xylulose 5-phosphate, which enters pentose phosphate pathway. The sequence is that of D-xylulose kinase A (xkiA) from Aspergillus niger.